The following is a 320-amino-acid chain: Cytochrome f (320 aa).

Positions 1 to 36 (MKLNSLINLIQKSIYSCTLLLTILNIICIAPNSSNA) are cleaved as a signal peptide. Positions 37, 57, 60, and 61 each coordinate heme. Residues 286–305 (IKGMIAFFFVSVLAQIFFVL) traverse the membrane as a helical segment.

It belongs to the cytochrome f family. As to quaternary structure, the 4 large subunits of the cytochrome b6-f complex are cytochrome b6, subunit IV (17 kDa polypeptide, petD), cytochrome f and the Rieske protein, while the 4 small subunits are PetG, PetL, PetM and PetN. The complex functions as a dimer. It depends on heme as a cofactor.

It localises to the plastid. It is found in the chloroplast thylakoid membrane. Functionally, component of the cytochrome b6-f complex, which mediates electron transfer between photosystem II (PSII) and photosystem I (PSI), cyclic electron flow around PSI, and state transitions. The protein is Cytochrome f (petA) of Porphyra purpurea (Red seaweed).